A 408-amino-acid chain; its full sequence is GTPase HflX (408 aa).

A Hflx-type G domain is found at 198–361; the sequence is PRVSLVGYTN…LIVREMERHY (164 aa). GTP contacts are provided by residues 204-211, 229-233, 251-254, 317-320, and 339-341; these read GYTNAGKS, FVTLD, DTVG, NKAD, and SAK. 2 residues coordinate Mg(2+): Ser-211 and Thr-231.

The protein belongs to the TRAFAC class OBG-HflX-like GTPase superfamily. HflX GTPase family. As to quaternary structure, monomer. Associates with the 50S ribosomal subunit. Mg(2+) serves as cofactor.

It is found in the cytoplasm. Its function is as follows. GTPase that associates with the 50S ribosomal subunit and may have a role during protein synthesis or ribosome biogenesis. The sequence is that of GTPase HflX from Spirochaeta thermophila (strain ATCC 49972 / DSM 6192 / RI 19.B1).